The primary structure comprises 60 residues: Large ribosomal subunit protein bL32 (60 aa).

Residues 1–16 (MAVPKRKTSPSKRGMR) show a composition bias toward basic residues. The disordered stretch occupies residues 1-60 (MAVPKRKTSPSKRGMRRSADALKAPTYVEDKNSGELRRPHHVDLKTGMYRGRQVLEPKEA). Residues 28-44 (VEDKNSGELRRPHHVDL) show a composition bias toward basic and acidic residues.

Belongs to the bacterial ribosomal protein bL32 family.

The protein is Large ribosomal subunit protein bL32 of Chelativorans sp. (strain BNC1).